We begin with the raw amino-acid sequence, 71 residues long: MPSVKVRDNEPFDVAMRRFKRSCEKAGVLAEVRSREFYEKPTQERKRKLAAAVKRNSRRLKKERSRFERLY.

The protein belongs to the bacterial ribosomal protein bS21 family.

This chain is Small ribosomal subunit protein bS21, found in Dichelobacter nodosus (strain VCS1703A).